Reading from the N-terminus, the 782-residue chain is U-box domain-containing protein 7 (782 aa).

Residues 271–345 (VPPEELRCPI…ASWCEQNGTQ (75 aa)) enclose the U-box domain. 5 ARM repeats span residues 456–499 (EEAR…NLAV), 502–541 (NRNKELMLTSGVIRLLEKMISSAESHGSATALYLNLSCLD), 542–581 (EAKSVIGSSQAVPFLVQLLQKEIETQCKLDALHALYNLST), 583–623 (SPNI…NLAS), and 626–665 (EGKDEAVSSQGMISSLATVLDMGDTTEQEQAVSCLLILCN). Basic and acidic residues predominate over residues 707–729 (EERQQRDQPSSNRDEPPQKEPAR). The tract at residues 707-765 (EERQQRDQPSSNRDEPPQKEPARKSLSAPLSVHGSTPASASVQDYEPRVLSKSMSRRKS) is disordered. Polar residues predominate over residues 739–748 (HGSTPASASV).

It carries out the reaction S-ubiquitinyl-[E2 ubiquitin-conjugating enzyme]-L-cysteine + [acceptor protein]-L-lysine = [E2 ubiquitin-conjugating enzyme]-L-cysteine + N(6)-ubiquitinyl-[acceptor protein]-L-lysine.. The protein operates within protein modification; protein ubiquitination. In terms of biological role, functions as an E3 ubiquitin ligase. In Arabidopsis thaliana (Mouse-ear cress), this protein is U-box domain-containing protein 7 (PUB7).